We begin with the raw amino-acid sequence, 211 residues long: MQDPHVPSSPTISSVSSSDLDTESTGSFFHDRSITLGTLMGFSFTATMPMPFRASSRRHVSPSVAISRASSSNARRNHQRKRPPSNSAEPEPHRRRKWWRFCRDDDDDAAGNGIHRGTGDSKRSSLGEYLEVERRFGDEAVYNSAEAELEDAVVARYQDQQPVMGERALFADGRVLPPASAEVVTGEGTPVATSLCRFPVSLTGICSGGGG.

Low complexity-rich tracts occupy residues 1-19 and 61-74; these read MQDP…SSSD and SPSV…SSNA. 2 disordered regions span residues 1-27 and 54-94; these read MQDP…STGS and ASSR…EPHR.

In terms of assembly, interacts with RLK902. As to expression, expressed in inflorescences, stems, rosette leaves and weakly in roots.

This is an uncharacterized protein from Arabidopsis thaliana (Mouse-ear cress).